Consider the following 323-residue polypeptide: Ribosomal protein L11 methyltransferase (323 aa).

Residues threonine 160, glycine 184, aspartate 206, and asparagine 257 each coordinate S-adenosyl-L-methionine.

The protein belongs to the methyltransferase superfamily. PrmA family.

The protein localises to the cytoplasm. The catalysed reaction is L-lysyl-[protein] + 3 S-adenosyl-L-methionine = N(6),N(6),N(6)-trimethyl-L-lysyl-[protein] + 3 S-adenosyl-L-homocysteine + 3 H(+). In terms of biological role, methylates ribosomal protein L11. In Agathobacter rectalis (strain ATCC 33656 / DSM 3377 / JCM 17463 / KCTC 5835 / VPI 0990) (Eubacterium rectale), this protein is Ribosomal protein L11 methyltransferase.